Consider the following 1366-residue polypeptide: Collagen alpha-2(I) chain (1366 aa).

The N-terminal stretch at 1 to 22 (MLSFVDTRTLLLLAVTSCLATC) is a signal peptide. Residue Gln-23 is modified to Pyrrolidone carboxylic acid. A propeptide spans 23-79 (QSLQEATARKGPTGDRGPRGERGPPGPPGRDGDDGIPGPPGPPGPPGPPGLGGNFAA) (N-terminal propeptide). A disordered region spans residues 27-1131 (EATARKGPTG…PRSPPSLRPK (1105 aa)). Basic and acidic residues predominate over residues 34-44 (PTGDRGPRGER). The span at 59–71 (PGPPGPPGPPGPP) shows a compositional bias: pro residues. The residue at position 84 (Lys-84) is an Allysine. Residues 84 to 94 (KGVGLGPGPMG) are compositionally biased toward gly residues. Over residues 95-132 (LMGPRGPPGASGAPGPQGFQGPAGEPGEPGQTGPAGAR) the composition is skewed to low complexity. Positions 141–155 (AGEDGHPGKPGRPGE) are enriched in basic and acidic residues. Lys-177 is modified (5-hydroxylysine; alternate). An O-linked (Gal...) hydroxylysine; alternate glycan is attached at Lys-177. 8 stretches are compositionally biased toward low complexity: residues 225-254 (VGAP…SAGP), 279-293 (AGPR…VSGP), 300-321 (PGAN…AGAP), 330-345 (PGPV…RGIV), 384-408 (NGEA…RGLP), 423-434 (RGATGPAGVRGP), 470-489 (LPGI…RGEP), and 513-531 (AGLA…NGAQ). A compositionally biased stretch (gly residues) spans 538 to 547 (GVQGGKGEQG). Residues 594–611 (PGESGAAGPSGPIGSRGP) show a composition bias toward low complexity. Positions 634–643 (GASGPGGLPG) are enriched in gly residues. Composition is skewed to low complexity over residues 668–690 (NPGR…AGAT) and 717–737 (VGPA…QPGA). Residues 738–747 (KGERGTKGPK) show a composition bias toward basic and acidic residues. Low complexity predominate over residues 756–765 (TGPIGSAGPS). A compositionally biased stretch (gly residues) spans 775–784 (GSRGDGGPPG). Composition is skewed to low complexity over residues 785 to 795 (ATGFPGAAGRT), 863 to 876 (PQGL…LGLP), 893 to 932 (EPGP…NPGN), 951 to 974 (PGNI…PTGK), and 981 to 1001 (PGPA…PSGP). Over residues 1005–1016 (RGDKGEPGEKGP) the composition is skewed to basic and acidic residues. Residues 1089–1103 (AGPPGPPGPPGPPGP) are compositionally biased toward pro residues. Positions 1120-1366 (DQPRSPPSLR…RVDVGPVCFK (247 aa)) are cleaved as a propeptide — C-terminal propeptide. The Fibrillar collagen NC1 domain maps to 1133 to 1366 (YEVDATLKSL…RVDVGPVCFK (234 aa)). 3 disulfide bridges follow: Cys-1163/Cys-1195, Cys-1203/Cys-1364, and Cys-1272/Cys-1317. The Ca(2+) site is built by Asp-1181, Asn-1183, Gln-1184, Cys-1186, and Asp-1189.

It belongs to the fibrillar collagen family. As to quaternary structure, trimers of one alpha 2(I) and two alpha 1(I) chains. Interacts (via C-terminus) with TMEM131 (via PapD-L domain); the interaction is direct and is involved in assembly and TRAPPIII ER-to-Golgi transport complex-dependent secretion of collagen. Post-translationally, prolines at the third position of the tripeptide repeating unit (G-X-Y) are hydroxylated in some or all of the chains. As to expression, forms the fibrils of tendon, ligaments and bones. In bones the fibrils are mineralized with calcium hydroxyapatite.

The protein localises to the secreted. The protein resides in the extracellular space. Its subcellular location is the extracellular matrix. Functionally, type I collagen is a member of group I collagen (fibrillar forming collagen). In Canis lupus familiaris (Dog), this protein is Collagen alpha-2(I) chain (COL1A2).